Reading from the N-terminus, the 476-residue chain is Adenosylhomocysteinase (476 aa).

Residues Thr67, Asp142, and Glu202 each contribute to the substrate site. 203-205 (TTT) serves as a coordination point for NAD(+). 2 residues coordinate substrate: Lys232 and Asp236. NAD(+) is bound by residues Asn237, 266–271 (GYGDVG), Glu289, Asn324, 345–347 (IGH), and Asn390.

This sequence belongs to the adenosylhomocysteinase family. NAD(+) serves as cofactor.

The protein resides in the cytoplasm. The catalysed reaction is S-adenosyl-L-homocysteine + H2O = L-homocysteine + adenosine. The protein operates within amino-acid biosynthesis; L-homocysteine biosynthesis; L-homocysteine from S-adenosyl-L-homocysteine: step 1/1. Functionally, may play a key role in the regulation of the intracellular concentration of adenosylhomocysteine. The chain is Adenosylhomocysteinase from Prochlorococcus marinus (strain MIT 9211).